We begin with the raw amino-acid sequence, 424 residues long: 3-phosphoshikimate 1-carboxyvinyltransferase (424 aa).

3-phosphoshikimate-binding residues include lysine 21, serine 22, and arginine 26. Phosphoenolpyruvate is bound at residue lysine 21. The phosphoenolpyruvate site is built by glycine 91 and arginine 119. Residues serine 164, glutamine 166, aspartate 310, and lysine 337 each coordinate 3-phosphoshikimate. Position 166 (glutamine 166) interacts with phosphoenolpyruvate. Aspartate 310 serves as the catalytic Proton acceptor. Arginine 341 and arginine 382 together coordinate phosphoenolpyruvate.

The protein belongs to the EPSP synthase family. Monomer.

It is found in the cytoplasm. The enzyme catalyses 3-phosphoshikimate + phosphoenolpyruvate = 5-O-(1-carboxyvinyl)-3-phosphoshikimate + phosphate. Its pathway is metabolic intermediate biosynthesis; chorismate biosynthesis; chorismate from D-erythrose 4-phosphate and phosphoenolpyruvate: step 6/7. Catalyzes the transfer of the enolpyruvyl moiety of phosphoenolpyruvate (PEP) to the 5-hydroxyl of shikimate-3-phosphate (S3P) to produce enolpyruvyl shikimate-3-phosphate and inorganic phosphate. In Campylobacter curvus (strain 525.92), this protein is 3-phosphoshikimate 1-carboxyvinyltransferase.